A 238-amino-acid polypeptide reads, in one-letter code: 3-deoxy-D-manno-octulosonic acid kinase (238 aa).

The active site involves D167.

Belongs to the protein kinase superfamily. KdkA/RfaP family.

Its subcellular location is the cell inner membrane. The catalysed reaction is an alpha-Kdo-(2-&gt;6)-lipid IVA + ATP = a 4-O-phospho-alpha-Kdo-(2-&gt;6)-lipid IVA + ADP + H(+). It participates in bacterial outer membrane biogenesis; LPS core biosynthesis. Its function is as follows. Catalyzes the ATP-dependent phosphorylation of the 3-deoxy-D-manno-octulosonic acid (Kdo) residue in Kdo-lipid IV(A) at the 4-OH position. The protein is 3-deoxy-D-manno-octulosonic acid kinase of Vibrio parahaemolyticus serotype O3:K6 (strain RIMD 2210633).